The primary structure comprises 184 residues: MKHKLMTSTIASLMFVAGAAVAADPTPVSVSGGTIHFEGKLVYAACAVSTKSADQTVTLGQYRTASFTAIGDTTAQVPFSIVLNDCDPKVAATAAVAFSGQADNTNTNLLAVSSADNSTTATGVGIEILDNTSSPLKPDGATFSAKQALVEGTNTLRFTARYKATAAATPGQANADATFIMKYE.

The first 22 residues, 1-22, serve as a signal peptide directing secretion; sequence MKHKLMTSTIASLMFVAGAAVA. Cys-46 and Cys-86 are oxidised to a cystine.

It belongs to the fimbrial protein family.

The protein localises to the fimbrium. Functionally, fimbriae (also called pili), polar filaments radiating from the surface of the bacterium to a length of 0.5-1.5 micrometers and numbering 100-300 per cell, enable bacteria to colonize the epithelium of specific host organs. The polypeptide is Type-1 fimbrial protein, A chain (fimA) (Salmonella typhi).